A 155-amino-acid polypeptide reads, in one-letter code: MIDLIARKRPPAGLRPALRASLSAAMQHFGGEEREVTVVLVGDPEIRALKLEHWGEDAATDVLSFPTWEPGDPFMPPHLGDIIISLDTAQRQAESRGHSLTREVALLASHGLTHLVGHDHPHAEGLGFEEGATGEDWQVFHDAWAAAQTGLPAGA.

Zn(2+) is bound by residues His110, His114, and His120.

Belongs to the endoribonuclease YbeY family. Requires Zn(2+) as cofactor.

The protein resides in the cytoplasm. Single strand-specific metallo-endoribonuclease involved in late-stage 70S ribosome quality control and in maturation of the 3' terminus of the 16S rRNA. The sequence is that of Endoribonuclease YbeY from Deinococcus radiodurans (strain ATCC 13939 / DSM 20539 / JCM 16871 / CCUG 27074 / LMG 4051 / NBRC 15346 / NCIMB 9279 / VKM B-1422 / R1).